We begin with the raw amino-acid sequence, 438 residues long: MGLPGSPWQRVLLLLGLLLPPATPFWLLNVLFPPHTTPKAELSNHTRPVILVPGCLGNRLEAKLDKPDVVNWMCYRKTEDFFTIWLDFNLFLPLGVDCWIDNTRIVYNHSSGRVSNAPGVQIRVPGFGKTESVEYVDDNKLAGYLHTLVQNLVNNGYVRDETVRAAPYDWRLAPHQQDEYYKKLAGLVEEMYAAYGKPVFLIGHSLGCLHVLHFLLRQPQSWKDHFIDGFISLGAPWGGSIKAMRILASGDNQGIPILSNIKLKEEQRITTTSPWMLPAPHVWPEDHVFISTPNFNYTVQDFERFFTDLHFEEGWHMFLQSRDLLERLPAPGVEVYCLYGVGRPTPHTYIYDHNFPYKDPVAALYEDGDDTVATRSTELCGQWQGRQSQPVHLLPMNETDHLNMVFSNKTLEHINAILLGAYRTPKSPAASPSPPPPE.

The first 24 residues, 1-24, serve as a signal peptide directing secretion; the sequence is MGLPGSPWQRVLLLLGLLLPPATP. N44 carries N-linked (GlcNAc...) asparagine glycosylation. C74 and C98 are oxidised to a cystine. Residue N108 is glycosylated (N-linked (GlcNAc...) asparagine). The Nucleophile role is filled by S205. N-linked (GlcNAc...) asparagine glycosylation occurs at N296. C337 and C380 are oxidised to a cystine. D369 serves as the catalytic Charge relay system. N397 is a glycosylation site (N-linked (GlcNAc...) asparagine). H401 acts as the Charge relay system in catalysis. N-linked (GlcNAc...) asparagine glycosylation is present at N408.

It belongs to the AB hydrolase superfamily. Lipase family. As to expression, detected in blood plasma. Produced and secreted by astrocytes (at protein level). Abundantly expressed in liver, brain and testis with highest levels in liver. In the brain, found in cerebellum, cerebral cortex, hippocampus and brain stem. Located to neurons and neuroglia.

It is found in the secreted. It carries out the reaction a sterol + a 1,2-diacyl-sn-glycero-3-phosphocholine = a sterol ester + a 1-acyl-sn-glycero-3-phosphocholine. The catalysed reaction is a 1-O-alkyl-2-acetyl-sn-glycero-3-phosphocholine + H2O = a 1-O-alkyl-sn-glycero-3-phosphocholine + acetate + H(+). It catalyses the reaction a 1-hexadecanoyl-2-acyl-sn-glycero-3-phosphocholine + (24S)-hydroxycholesterol = (24S)-24-hydroxycholesterol ester + 1-hexadecanoyl-sn-glycero-3-phosphocholine. The enzyme catalyses (24S)-hydroxycholesterol + 1-hexadecanoyl-2-(9Z,12Z-octadecadienoyl)-sn-glycero-3-phosphocholine = (24S)-hydroxycholesterol 3-linoleoate + 1-hexadecanoyl-sn-glycero-3-phosphocholine. It carries out the reaction 1-hexadecanoyl-2-(5Z,8Z,11Z,14Z-eicosatetraenoyl)-sn-glycero-3-phosphocholine + cholesterol = cholesteryl (5Z,8Z,11Z,14Z)-eicosatetraenoate + 1-hexadecanoyl-sn-glycero-3-phosphocholine. The catalysed reaction is 1-hexadecanoyl-2-(9Z-octadecenoyl)-sn-glycero-3-phosphocholine + cholesterol = cholesteryl (9Z-octadecenoate) + 1-hexadecanoyl-sn-glycero-3-phosphocholine. It catalyses the reaction 1-hexadecanoyl-2-(8Z,11Z,14Z-eicosatrienoyl)-sn-glycero-3-phosphocholine + cholesterol = cholesteryl (8Z,11Z,14Z)-eicosatrienoate + 1-hexadecanoyl-sn-glycero-3-phosphocholine. The enzyme catalyses 1-hexadecanoyl-2-(5Z,8Z,11Z-eicosatrienoyl)-sn-glycero-3-phosphocholine + cholesterol = cholesteryl (5Z,8Z,11Z)-eicosatrienoate + 1-hexadecanoyl-sn-glycero-3-phosphocholine. It carries out the reaction 1-hexadecanoyl-2-(5Z,8Z,11Z,14Z,17Z-eicosapentaenoyl)-sn-glycero-3-phosphocholine + cholesterol = (5Z,8Z,11Z,14Z,17Z-eicosapentaenoyl)-cholesterol + 1-hexadecanoyl-sn-glycero-3-phosphocholine. The catalysed reaction is 1-hexadecanoyl-2-(9Z,12Z-octadecadienoyl)-sn-glycero-3-phosphocholine + cholesterol = cholesteryl (9Z,12Z)-octadecadienoate + 1-hexadecanoyl-sn-glycero-3-phosphocholine. It catalyses the reaction 1-hexadecanoyl-2-(6Z,9Z,12Z-octadecatrienoyl)-sn-glycero-3-phosphocholine + cholesterol = (6Z,9Z,12Z-octadecatrienoyl)-cholesterol + 1-hexadecanoyl-sn-glycero-3-phosphocholine. The enzyme catalyses 1-hexadecanoyl-2-(11Z,14Z,17Z-eicosatrienoyl)-sn-glycero-3-phosphocholine + cholesterol = (11Z,14Z,17Z-eicosatrienoyl)-cholesterol + 1-hexadecanoyl-sn-glycero-3-phosphocholine. It carries out the reaction 1-hexadecanoyl-2-(9Z,12Z,15Z-octadecatrienoyl)-sn-glycero-3-phosphocholine + cholesterol = (9Z,12Z,15Z-octadecatrienoyl)-cholesterol + 1-hexadecanoyl-sn-glycero-3-phosphocholine. The catalysed reaction is 1-hexadecanoyl-2-(9Z,12Z-octadecadienoyl)-sn-glycero-3-phosphocholine + H2O = (9Z,12Z)-octadecadienoate + 1-hexadecanoyl-sn-glycero-3-phosphocholine + H(+). It catalyses the reaction 1-hexadecanoyl-2-(5Z,8Z,11Z,14Z-eicosatetraenoyl)-sn-glycero-3-phosphocholine + H2O = 1-hexadecanoyl-sn-glycero-3-phosphocholine + (5Z,8Z,11Z,14Z)-eicosatetraenoate + H(+). The enzyme catalyses a 1-O-alkyl-2-acetyl-sn-glycero-3-phosphocholine + 1-hexadecanoyl-sn-glycero-3-phosphocholine = 1-hexadecanoyl-2-acetyl-sn-glycero-3-phosphocholine + a 1-O-alkyl-sn-glycero-3-phosphocholine. APOA1 is the most potent activator in plasma. Also activated by APOE, APOC1 and APOA4. Its function is as follows. Central enzyme in the extracellular metabolism of plasma lipoproteins. Synthesized mainly in the liver and secreted into plasma where it converts cholesterol and phosphatidylcholines (lecithins) to cholesteryl esters and lysophosphatidylcholines on the surface of high and low density lipoproteins (HDLs and LDLs). The cholesterol ester is then transported back to the liver. Also produced in the brain by primary astrocytes, and esterifies free cholesterol on nascent APOE-containing lipoproteins secreted from glia and influences cerebral spinal fluid (CSF) APOE- and APOA1 levels. Together with APOE and the cholesterol transporter ABCA1, plays a key role in the maturation of glial-derived, nascent lipoproteins. Required for remodeling high-density lipoprotein particles into their spherical forms. Has a preference for plasma 16:0-18:2 or 18:O-18:2 phosphatidylcholines. Catalyzes the hydrolysis of 1-O-alkyl-2-acetyl-sn-glycero-3-phosphocholine (platelet-activating factor or PAF) to 1-O-alkyl-sn-glycero-3-phosphocholine (lyso-PAF). Also catalyzes the transfer of the acetate group from PAF to 1-hexadecanoyl-sn-glycero-3-phosphocholine forming lyso-PAF. Catalyzes the esterification of (24S)-hydroxycholesterol (24(S)OH-C), also known as cerebrosterol to produce 24(S)OH-C monoesters. The polypeptide is Phosphatidylcholine-sterol acyltransferase (Lcat) (Mus musculus (Mouse)).